A 317-amino-acid chain; its full sequence is UV DNA damage endonuclease (317 aa).

This sequence belongs to the uve1/UvsE family.

Functionally, component in a DNA repair pathway. Removal of UV LIGHT damaged nucleotides. Recognizes pyrimidine dimers and cleave a phosphodiester bond immediately 5' to the lesion. This chain is UV DNA damage endonuclease, found in Bacillus mycoides (strain KBAB4) (Bacillus weihenstephanensis).